We begin with the raw amino-acid sequence, 347 residues long: (RS)-norcoclaurine 6-O-methyltransferase (347 aa).

5 residues coordinate S-adenosyl-L-methionine: G192, D215, D235, M236, and K249. H253 acts as the Proton acceptor in catalysis.

The protein belongs to the class I-like SAM-binding methyltransferase superfamily. Cation-independent O-methyltransferase family. COMT subfamily. Homodimer.

The enzyme catalyses norcoclaurine + S-adenosyl-L-methionine = coclaurine + S-adenosyl-L-homocysteine + H(+). It participates in alkaloid biosynthesis; (S)-reticuline biosynthesis; (S)-reticuline from (S)-norcoclaurine: step 1/4. In terms of biological role, catalyzes the transfer of the S-methyl group of S-adenosyl-L-methionine (AdoMet) to the 6-hydroxyl group of norcoclaurine to form coclaurine. The sequence is that of (RS)-norcoclaurine 6-O-methyltransferase from Coptis japonica (Japanese goldthread).